Reading from the N-terminus, the 177-residue chain is Large ribosomal subunit protein uL6 (177 aa).

This sequence belongs to the universal ribosomal protein uL6 family. Part of the 50S ribosomal subunit.

In terms of biological role, this protein binds to the 23S rRNA, and is important in its secondary structure. It is located near the subunit interface in the base of the L7/L12 stalk, and near the tRNA binding site of the peptidyltransferase center. This Methanothermobacter thermautotrophicus (strain ATCC 29096 / DSM 1053 / JCM 10044 / NBRC 100330 / Delta H) (Methanobacterium thermoautotrophicum) protein is Large ribosomal subunit protein uL6.